A 620-amino-acid polypeptide reads, in one-letter code: 1-deoxy-D-xylulose-5-phosphate synthase (620 aa).

Residues H80 and 121-123 (GHS) each bind thiamine diphosphate. D152 is a Mg(2+) binding site. Thiamine diphosphate contacts are provided by residues 153–154 (GA), N181, Y288, and E370. A Mg(2+)-binding site is contributed by N181.

This sequence belongs to the transketolase family. DXPS subfamily. Homodimer. The cofactor is Mg(2+). Requires thiamine diphosphate as cofactor.

It carries out the reaction D-glyceraldehyde 3-phosphate + pyruvate + H(+) = 1-deoxy-D-xylulose 5-phosphate + CO2. It participates in metabolic intermediate biosynthesis; 1-deoxy-D-xylulose 5-phosphate biosynthesis; 1-deoxy-D-xylulose 5-phosphate from D-glyceraldehyde 3-phosphate and pyruvate: step 1/1. In terms of biological role, catalyzes the acyloin condensation reaction between C atoms 2 and 3 of pyruvate and glyceraldehyde 3-phosphate to yield 1-deoxy-D-xylulose-5-phosphate (DXP). This is 1-deoxy-D-xylulose-5-phosphate synthase from Enterobacter sp. (strain 638).